A 134-amino-acid polypeptide reads, in one-letter code: Profilin-3 (134 aa).

A disulfide bond links Cys-13 and Cys-118. Residues 84-100 (AVIRGKKGSGGITIKKT) carry the Involved in PIP2 interaction motif. Phosphothreonine is present on Thr-114.

This sequence belongs to the profilin family. In terms of assembly, occurs in many kinds of cells as a complex with monomeric actin in a 1:1 ratio. Post-translationally, phosphorylated by MAP kinases.

The protein localises to the cytoplasm. It is found in the cytoskeleton. Its function is as follows. Binds to actin and affects the structure of the cytoskeleton. At high concentrations, profilin prevents the polymerization of actin, whereas it enhances it at low concentrations. This is Profilin-3 from Olea europaea (Common olive).